Reading from the N-terminus, the 187-residue chain is Ribosome-recycling factor (187 aa).

The protein belongs to the RRF family.

The protein localises to the cytoplasm. In terms of biological role, responsible for the release of ribosomes from messenger RNA at the termination of protein biosynthesis. May increase the efficiency of translation by recycling ribosomes from one round of translation to another. This chain is Ribosome-recycling factor, found in Methylobacterium radiotolerans (strain ATCC 27329 / DSM 1819 / JCM 2831 / NBRC 15690 / NCIMB 10815 / 0-1).